Here is a 577-residue protein sequence, read N- to C-terminus: MDPAFIFITGGVVSSLGKGIAAGAIGLLLKSRGISVVNQKFDPYLNGDPGTMNPYQHGEVFVTQDGGETDLDLGHYERFTDVPSSRFNSTTAGSVYRAILDRERAGGYGGATVQVIPHVTDEIQARIRAAAATTGARVVITEIGGTVGDIESLPFIEAIRQIRRVLGKERCLFIHLGLVPYLPSCGEMKTKPLQHSVKELLGLGVQPDVILCRSERHITDAVREKLSLFCNVERRAIVENVTARSIYEVPLLLEAEGLGALLCERLRLFDTCCGGQVARNLGAGGAQSAVLGAGGTVRTDGGLHPAAGQGAEPDLTAWRAMVRALYYPRRELTVALVGKYVSLADAYLSVSEALTAAGICHRARVDMRWIDAEEICSVQDAGHALADADALVIPGGFGVRGIEGMICAVSHARVQNLPYLGICLGMQIAVIEFARNVLLLASAHSREFAVDTPHPVVDLLPGCVDTPTGGSLRLGQYRCLLAEGSRARALYGRGEVWERHRHRYGLNAAYRARFEASALRPVGVDSDCGAVEVVEHGEHPWFFGVQFHPEFCSRPNRAHPLFRALVAAGLERKDSRS.

The interval 1 to 268 (MDPAFIFITG…GALLCERLRL (268 aa)) is amidoligase domain. Residue Ser14 participates in CTP binding. UTP is bound at residue Ser14. Residue 15–20 (SLGKGI) coordinates ATP. Tyr55 serves as a coordination point for L-glutamine. Asp72 contacts ATP. The Mg(2+) site is built by Asp72 and Glu142. Residues 149–151 (DIE), 189–194 (KTKPLQ), and Lys225 each bind CTP. Residues 189-194 (KTKPLQ) and Lys225 each bind UTP. The region spanning 333 to 575 (TVALVGKYVS…VAAGLERKDS (243 aa)) is the Glutamine amidotransferase type-1 domain. Gly396 contributes to the L-glutamine binding site. Cys423 serves as the catalytic Nucleophile; for glutamine hydrolysis. Residues 424-427 (LGMQ), Glu447, and Arg503 each bind L-glutamine. Active-site residues include His548 and Glu550.

The protein belongs to the CTP synthase family. In terms of assembly, homotetramer.

It carries out the reaction UTP + L-glutamine + ATP + H2O = CTP + L-glutamate + ADP + phosphate + 2 H(+). The catalysed reaction is L-glutamine + H2O = L-glutamate + NH4(+). It catalyses the reaction UTP + NH4(+) + ATP = CTP + ADP + phosphate + 2 H(+). The protein operates within pyrimidine metabolism; CTP biosynthesis via de novo pathway; CTP from UDP: step 2/2. With respect to regulation, allosterically activated by GTP, when glutamine is the substrate; GTP has no effect on the reaction when ammonia is the substrate. The allosteric effector GTP functions by stabilizing the protein conformation that binds the tetrahedral intermediate(s) formed during glutamine hydrolysis. Inhibited by the product CTP, via allosteric rather than competitive inhibition. Catalyzes the ATP-dependent amination of UTP to CTP with either L-glutamine or ammonia as the source of nitrogen. Regulates intracellular CTP levels through interactions with the four ribonucleotide triphosphates. This is CTP synthase from Treponema pallidum (strain Nichols).